A 153-amino-acid chain; its full sequence is Pheromone-binding protein Gp-9 (153 aa).

The first 19 residues, 1–19 (MKTLILHICIFALVAFASA), serve as a signal peptide directing secretion. 3 disulfide bridges follow: Cys37-Cys77, Cys73-Cys129, and Cys118-Cys138.

This sequence belongs to the PBP/GOBP family. As to quaternary structure, homodimer.

The protein localises to the secreted. Its function is as follows. Colony queen number, a major feature of social organization, is associated with worker genotype for Gp-9. Colonies are headed by either a single reproductive queen (monogyne form) or multiple queens (polygyne form). Differences in worker Gp-9 genotypes between social forms may cause differences in workers' abilities to recognize queens and regulate their numbers. This Solenopsis nigella gensterblumi (Fire ant) protein is Pheromone-binding protein Gp-9.